Here is a 179-residue protein sequence, read N- to C-terminus: MAAFAARYARAFADVVAEAHLPLEQVQQQLDDFMATWNGAADLREVFLDPSFPAEEKVAILDRMNQKLGLAPVVRNFLAVVLQHERMHAMEEILKEFREEMNRRLGITAVSITSARALNEAERKSLLEQVGTLAEGRVDASFHEDASLLGGVVVQIGSKVYDGSVRGRFARLEEQLAVR.

The protein belongs to the ATPase delta chain family. As to quaternary structure, F-type ATPases have 2 components, F(1) - the catalytic core - and F(0) - the membrane proton channel. F(1) has five subunits: alpha(3), beta(3), gamma(1), delta(1), epsilon(1). F(0) has three main subunits: a(1), b(2) and c(10-14). The alpha and beta chains form an alternating ring which encloses part of the gamma chain. F(1) is attached to F(0) by a central stalk formed by the gamma and epsilon chains, while a peripheral stalk is formed by the delta and b chains.

Its subcellular location is the cell inner membrane. Functionally, f(1)F(0) ATP synthase produces ATP from ADP in the presence of a proton or sodium gradient. F-type ATPases consist of two structural domains, F(1) containing the extramembraneous catalytic core and F(0) containing the membrane proton channel, linked together by a central stalk and a peripheral stalk. During catalysis, ATP synthesis in the catalytic domain of F(1) is coupled via a rotary mechanism of the central stalk subunits to proton translocation. In terms of biological role, this protein is part of the stalk that links CF(0) to CF(1). It either transmits conformational changes from CF(0) to CF(1) or is implicated in proton conduction. The chain is ATP synthase subunit delta from Acidobacterium capsulatum (strain ATCC 51196 / DSM 11244 / BCRC 80197 / JCM 7670 / NBRC 15755 / NCIMB 13165 / 161).